The chain runs to 34 residues: Dermaseptin-S2 (34 aa).

Belongs to the frog skin active peptide (FSAP) family. Dermaseptin subfamily. In terms of tissue distribution, expressed by the skin glands.

The protein localises to the secreted. Potent antimicrobial peptide with activity against bacteria and protozoa. Also has activity against fungi. Probably acts by disturbing membrane functions with its amphipathic structure. The protein is Dermaseptin-S2 of Phyllomedusa sauvagei (Sauvage's leaf frog).